A 270-amino-acid chain; its full sequence is Protein N-terminal and lysine N-methyltransferase EFM7 (270 aa).

Positions 1 to 45 (MSDIESLNGGDLFAEPSDFYKPPPEPHFATYTRDDVPESSTSQQK) are disordered. Residues tryptophan 63, 89-91 (GAA), aspartate 111, tryptophan 158, and serine 182 contribute to the S-adenosyl-L-methionine site.

Belongs to the class I-like SAM-binding methyltransferase superfamily. EFM7 family.

It is found in the cytoplasm. In terms of biological role, S-adenosyl-L-methionine-dependent protein methyltransferase that trimethylates the N-terminal glycine 'Gly-2' of elongation factor 1-alpha, before also catalyzing the mono- and dimethylation of 'Lys-3'. This chain is Protein N-terminal and lysine N-methyltransferase EFM7, found in Kluyveromyces lactis (strain ATCC 8585 / CBS 2359 / DSM 70799 / NBRC 1267 / NRRL Y-1140 / WM37) (Yeast).